The following is a 300-amino-acid chain: NAD kinase (300 aa).

Asp-75 functions as the Proton acceptor in the catalytic mechanism. NAD(+) contacts are provided by residues 75–76, 149–150, Arg-177, Asp-179, 190–195, Ala-214, and Gln-248; these read DG, ND, and TAYALS.

It belongs to the NAD kinase family. The cofactor is a divalent metal cation.

The protein localises to the cytoplasm. It catalyses the reaction NAD(+) + ATP = ADP + NADP(+) + H(+). Functionally, involved in the regulation of the intracellular balance of NAD and NADP, and is a key enzyme in the biosynthesis of NADP. Catalyzes specifically the phosphorylation on 2'-hydroxyl of the adenosine moiety of NAD to yield NADP. This is NAD kinase from Burkholderia mallei (strain SAVP1).